A 332-amino-acid polypeptide reads, in one-letter code: L-lactate dehydrogenase A chain (332 aa).

NAD(+) contacts are provided by residues 29–57 (GAVGMACAISILMKDLADELALVDVMEDK) and Arg99. Substrate-binding residues include Arg106, Asn138, and Arg169. Asn138 lines the NAD(+) pocket. His193 acts as the Proton acceptor in catalysis. Residue Thr248 participates in substrate binding.

The protein belongs to the LDH/MDH superfamily. LDH family. As to quaternary structure, homotetramer.

The protein resides in the cytoplasm. The enzyme catalyses (S)-lactate + NAD(+) = pyruvate + NADH + H(+). Its pathway is fermentation; pyruvate fermentation to lactate; (S)-lactate from pyruvate: step 1/1. Its function is as follows. Interconverts simultaneously and stereospecifically pyruvate and lactate with concomitant interconversion of NADH and NAD(+). The chain is L-lactate dehydrogenase A chain (LDHA) from Sceloporus undulatus (Eastern fence lizard).